Consider the following 554-residue polypeptide: Arginine--tRNA ligase (554 aa).

Positions 132–142 (ANPTGPIHLGG) match the 'HIGH' region motif.

This sequence belongs to the class-I aminoacyl-tRNA synthetase family. Monomer.

Its subcellular location is the cytoplasm. It catalyses the reaction tRNA(Arg) + L-arginine + ATP = L-arginyl-tRNA(Arg) + AMP + diphosphate. The sequence is that of Arginine--tRNA ligase from Kineococcus radiotolerans (strain ATCC BAA-149 / DSM 14245 / SRS30216).